A 441-amino-acid chain; its full sequence is Cytochrome P450 monooxygenase cpsC (441 aa).

Residues 175–195 form a disordered region; the sequence is STTSQARKDETTATQQAGMEQ. Residues 186 to 195 show a composition bias toward polar residues; the sequence is TATQQAGMEQ. Cys-377 is a heme binding site.

The protein belongs to the cytochrome P450 family. It depends on heme as a cofactor.

The enzyme catalyses campesine D + reduced [NADPH--hemoprotein reductase] + O2 = campesine G + oxidized [NADPH--hemoprotein reductase] + 2 H2O + H(+). It participates in alkaloid biosynthesis. Functionally, cytochrome P450 monooxygenase; part of the gene cluster that mediates the biosynthesis of campesine G, a dimeric indole piperazine alkaloid that shows good insecticidal activity Galleria mellonella. Within the pathway, cpsC catalyzes regioselective dehydrogenation reaction towards C2-N1 of the (2H)-indole ring of campesine D to yield the final product, campesine G. The non-canonical non-ribosomal peptide synthetase cpsA catalyzes the first steps of the pathway by producing L-tryptophanal and L-valinal from their respective amino-acids. These products condensate spontaneously to form trypyl-valyl pyrazine also known as didehydrocampesine A. The NmrA-like family domain-containing oxidoreductase cpsB is the next enzyme in cps pathway and reduces the unstable didehydrocampesine A to campesine A. The methyltransferase cpsF and the acetyltransferase cpsE both recognize N13 of piperazine ring to carry out methylation and acetylation of campesine A to produce campesine C and B, respectively. The cytochrome P450 monooxygenase cpsD then acts as a dimerase that catalyzes oxidative heterocoupling between campesine B and C to produce heterodimers with unexpected 6/5/6/6/6/6/5/6 eight-ring scaffold called campesine D. Finally,the cytochrome P450 monooxygenase cpsC is a regioselective dehydrogenase that catalyzes dehydrogenation reaction towards C2-N1 to produce campesine G. This is Cytochrome P450 monooxygenase cpsC from Aspergillus campestris (strain IBT 28561).